Consider the following 90-residue polypeptide: Envelope protein US9 homolog (90 aa).

Residues Met-1–Ala-63 lie on the Intravirion side of the membrane. A Di-leucine internalization motif motif is present at residues Leu-12–Leu-13. The acidic stretch occupies residues Glu-29–Glu-38. The chain crosses the membrane as a helical; Signal-anchor for type II membrane protein span at residues Ala-64–Met-84. Over Cys-85 to Arg-90 the chain is Virion surface.

It belongs to the alphaherpesvirinae envelope protein US9 family. Phosphorylated on serines within the acidic cluster. Phosphorylation determines whether endocytosed viral US9 traffics to the trans-Golgi network or recycles to the cell membrane.

Its subcellular location is the virion membrane. The protein localises to the host Golgi apparatus membrane. It is found in the host smooth endoplasmic reticulum membrane. It localises to the host cell membrane. In terms of biological role, essential for the anterograde spread of the infection throughout the host nervous system. Together with the gE/gI heterodimer, US9 is involved in the sorting and transport of viral structural components toward axon tips. This is Envelope protein US9 homolog from Cercopithecine herpesvirus 1 (CeHV-1).